A 134-amino-acid polypeptide reads, in one-letter code: Small ribosomal subunit protein uS11 (134 aa).

This sequence belongs to the universal ribosomal protein uS11 family. Part of the 30S ribosomal subunit. Interacts with proteins S7 and S18. Binds to IF-3.

Its function is as follows. Located on the platform of the 30S subunit, it bridges several disparate RNA helices of the 16S rRNA. Forms part of the Shine-Dalgarno cleft in the 70S ribosome. In Corynebacterium glutamicum (strain R), this protein is Small ribosomal subunit protein uS11.